Here is a 267-residue protein sequence, read N- to C-terminus: Potassium channel regulatory protein (267 aa).

The BTB domain maps to 5–74 (ELVTLNVGGK…LRTQQLLLPT (70 aa)).

In terms of assembly, can form homooligomers. Interacts with KCNA1 (via cytoplasmic N-terminal domain) and KCNA4.

It is found in the endoplasmic reticulum. Functionally, inhibits potassium fluxes in cells. May regulate Kv1 family channel proteins by retaining a fraction of channels in endomembranes. This is Potassium channel regulatory protein (KCNRG) from Bos taurus (Bovine).